The primary structure comprises 537 residues: Apolipoprotein N-acyltransferase (537 aa).

Helical transmembrane passes span 10-30 (IALA…ITAG), 37-57 (LAPF…VWLI), 76-96 (YWFG…AFFV), 107-127 (FAVL…FALA), 181-201 (IGLW…ATLI), and 210-230 (AWRA…FGAI). One can recognise a CN hydrolase domain in the interval 248-501 (MQPNLQQDAK…EGILDASLPA (254 aa)). The Proton acceptor role is filled by glutamate 295. Residue lysine 360 is part of the active site. Catalysis depends on cysteine 413, which acts as the Nucleophile. The chain crosses the membrane as a helical span at residues 507-527 (IYARVGDVPAAVLVALAVLLA).

It belongs to the CN hydrolase family. Apolipoprotein N-acyltransferase subfamily.

It localises to the cell inner membrane. The enzyme catalyses N-terminal S-1,2-diacyl-sn-glyceryl-L-cysteinyl-[lipoprotein] + a glycerophospholipid = N-acyl-S-1,2-diacyl-sn-glyceryl-L-cysteinyl-[lipoprotein] + a 2-acyl-sn-glycero-3-phospholipid + H(+). It functions in the pathway protein modification; lipoprotein biosynthesis (N-acyl transfer). Catalyzes the phospholipid dependent N-acylation of the N-terminal cysteine of apolipoprotein, the last step in lipoprotein maturation. The polypeptide is Apolipoprotein N-acyltransferase (Bradyrhizobium diazoefficiens (strain JCM 10833 / BCRC 13528 / IAM 13628 / NBRC 14792 / USDA 110)).